Here is a 497-residue protein sequence, read N- to C-terminus: L-arabinose isomerase (497 aa).

The Mn(2+) site is built by Glu306, Glu331, His348, and His447.

This sequence belongs to the arabinose isomerase family. It depends on Mn(2+) as a cofactor.

It catalyses the reaction beta-L-arabinopyranose = L-ribulose. It functions in the pathway carbohydrate degradation; L-arabinose degradation via L-ribulose; D-xylulose 5-phosphate from L-arabinose (bacterial route): step 1/3. Functionally, catalyzes the conversion of L-arabinose to L-ribulose. The polypeptide is L-arabinose isomerase (Halalkalibacterium halodurans (strain ATCC BAA-125 / DSM 18197 / FERM 7344 / JCM 9153 / C-125) (Bacillus halodurans)).